The chain runs to 301 residues: Probable 2-dehydro-3-deoxy-D-pentonate aldolase YjhH (301 aa).

Active-site charge relay system residues include T46 and Y109. Y135 serves as the catalytic Proton donor. Catalysis depends on K164, which acts as the Schiff-base intermediate with substrate.

Belongs to the DapA family.

It localises to the cytoplasm. The catalysed reaction is 2-dehydro-3-deoxy-D-arabinonate = glycolaldehyde + pyruvate. Functions as a 2-dehydro-3-deoxy-D-pentonate aldolase. This Escherichia coli (strain K12) protein is Probable 2-dehydro-3-deoxy-D-pentonate aldolase YjhH (yjhH).